The primary structure comprises 418 residues: Serpin H1 (418 aa).

Positions 1–18 (MRALLLISTICLLARALA) are cleaved as a signal peptide. The residue at position 94 (Lys94) is an N6-succinyllysine. N-linked (GlcNAc...) asparagine glycosylation is found at Asn120 and Asn125. Ser141 carries the phosphoserine modification. Position 207 is an N6-acetyllysine (Lys207). Lys296 is modified (N6-succinyllysine). Lys319 carries the N6-acetyllysine modification. The Prevents secretion from ER motif lies at 415 to 418 (RDEL).

It belongs to the serpin family.

The protein localises to the endoplasmic reticulum lumen. Its function is as follows. Binds specifically to collagen. Could be involved as a chaperone in the biosynthetic pathway of collagen. This chain is Serpin H1 (SERPINH1), found in Bos taurus (Bovine).